Here is a 999-residue protein sequence, read N- to C-terminus: Translation initiation factor IF-2 (999 aa).

The segment at 50–407 (AFVNNTGSPA…RGQGQTVRLS (358 aa)) is disordered. Composition is skewed to pro residues over residues 60–89 (PAAP…PPGG) and 96–121 (PMPP…PPQS). A compositionally biased stretch (low complexity) spans 136 to 162 (VAAAEARAAALKAEQEAAVKAAQAARQ). Over residues 163–173 (QQRDNVRREPP) the composition is skewed to basic and acidic residues. The span at 179–194 (RPGPRPGPGAMPPRPG) shows a compositional bias: pro residues. Residues 213 to 222 (GGRPPARGAG) are compositionally biased toward low complexity. Residues 244 to 266 (RPSPASMPPRPSPASMPPRPSPA) are compositionally biased toward pro residues. Positions 275 to 367 (RPGGPGSGRP…GAAGAFGRPG (93 aa)) are enriched in gly residues. The span at 371–380 (TRGRKSKKQR) shows a compositional bias: basic residues. The span at 388–405 (SAPTMSSGAPRGQGQTVR) shows a compositional bias: polar residues. The 173-residue stretch at 490-662 (SRPPVVTVMG…VLLTADASLE (173 aa)) folds into the tr-type G domain. Residues 499 to 506 (GHVDHGKT) are G1. 499-506 (GHVDHGKT) serves as a coordination point for GTP. Residues 524-528 (GITQH) form a G2 region. The G3 stretch occupies residues 549–552 (DTPG). Residues 549–553 (DTPGH) and 603–606 (NKID) contribute to the GTP site. The interval 603–606 (NKID) is G4. Residues 639–641 (AAK) are G5.

Belongs to the TRAFAC class translation factor GTPase superfamily. Classic translation factor GTPase family. IF-2 subfamily.

The protein resides in the cytoplasm. Its function is as follows. One of the essential components for the initiation of protein synthesis. Protects formylmethionyl-tRNA from spontaneous hydrolysis and promotes its binding to the 30S ribosomal subunits. Also involved in the hydrolysis of GTP during the formation of the 70S ribosomal complex. This is Translation initiation factor IF-2 from Salinispora tropica (strain ATCC BAA-916 / DSM 44818 / JCM 13857 / NBRC 105044 / CNB-440).